Reading from the N-terminus, the 161-residue chain is Transcription elongation factor GreA (161 aa).

Positions 46–71 (AEYTAAKEKQSFLHGKLQELENNLAL) form a coiled coil.

Belongs to the GreA/GreB family.

Its function is as follows. Necessary for efficient RNA polymerase transcription elongation past template-encoded arresting sites. The arresting sites in DNA have the property of trapping a certain fraction of elongating RNA polymerases that pass through, resulting in locked ternary complexes. Cleavage of the nascent transcript by cleavage factors such as GreA or GreB allows the resumption of elongation from the new 3'terminus. GreA releases sequences of 2 to 3 nucleotides. The sequence is that of Transcription elongation factor GreA from Syntrophus aciditrophicus (strain SB).